A 157-amino-acid polypeptide reads, in one-letter code: uncharacterized protein (157 aa).

One can recognise an N-acetyltransferase domain in the interval 3–157 (FTLEDMTEEE…TNIRMRKQLC (155 aa)).

This sequence belongs to the acetyltransferase family.

This is an uncharacterized protein from Bacillus subtilis (strain 168).